The sequence spans 1052 residues: Membrane-bound transcription factor site-1 protease (1052 aa).

Positions 1–17 are cleaved as a signal peptide; sequence MKLINIWLLLLVVLLCG. Positions 18–186 are excised as a propeptide; sequence KKHLGDRLGK…TGRHSSRRLL (169 aa). A glycan (N-linked (GlcNAc...) asparagine) is linked at Asn148. Ser168 carries the post-translational modification Phosphoserine. The Lumenal portion of the chain corresponds to 187 to 999; sequence RAIPRQVAQT…MPGRYNQEVG (813 aa). Residues 190–472 enclose the Peptidase S8 domain; sequence PRQVAQTLQA…HGKLDLLRAY (283 aa). The Charge relay system role is filled by Asp218. The N-linked (GlcNAc...) asparagine glycan is linked to Asn236. The Charge relay system role is filled by His249. Residue Asn305 is glycosylated (N-linked (GlcNAc...) asparagine). Catalysis depends on Ser414, which acts as the Charge relay system. N-linked (GlcNAc...) asparagine glycosylation is found at Asn515 and Asn728. Residues 877–887 show a composition bias toward polar residues; that stretch reads PSLSHSGNRQR. Positions 877–900 are disordered; it reads PSLSHSGNRQRPPSGAGLAPPERM. Asn939 carries an N-linked (GlcNAc...) asparagine glycan. The helical transmembrane segment at 1000-1022 threads the bilayer; that stretch reads QTIPVFAFLGAMVALAFFVVQIS. Residues 1023 to 1052 lie on the Cytoplasmic side of the membrane; that stretch reads KAKSRPKRRRPRAKRPQLTQQTHPPRTPSV. Basic residues predominate over residues 1025-1037; that stretch reads KSRPKRRRPRAKR. The segment at 1025–1052 is disordered; it reads KSRPKRRRPRAKRPQLTQQTHPPRTPSV.

It belongs to the peptidase S8 family. It depends on Ca(2+) as a cofactor. The 148 kDa zymogen is processed progressively into two membrane-bound 120 and 106 kDa forms in the endoplasmic reticulum, and late into a secreted 98 kDa form. The propeptide is autocatalytically removed through an intramolecular cleavage after Leu-186. Further cleavage generates 14, 10, and 8 kDa intermediates.

Its subcellular location is the endoplasmic reticulum membrane. It localises to the golgi apparatus membrane. It catalyses the reaction Processes precursors containing basic and hydrophobic/aliphatic residues at P4 and P2, respectively, with a relatively relaxed acceptance of amino acids at P1 and P3.. Its activity is regulated as follows. Inhibited by divalent copper and zinc ions, but not by nickel or cobalt. Inhibited by its prosegment, but not smaller fragments. Inhibited by 4-(2-aminoethyl)benzenesulfonyl fluoride (AEBSF), a serine protease inhibitor. Serine protease that cleaves after hydrophobic or small residues, provided that Arg or Lys is in position P4: known substrates include SREBF1/SREBP1, SREBF2/SREBP2, BDNF, GNPTAB, ATF6, ATF6B and FAM20C. Cleaves substrates after Arg-Ser-Val-Leu (SREBP2), Arg-His-Leu-Leu (ATF6), Arg-Gly-Leu-Thr (BDNF) and its own propeptide after Arg-Arg-Leu-Leu. Catalyzes the first step in the proteolytic activation of the sterol regulatory element-binding proteins (SREBPs) SREBF1/SREBP1 and SREBF2/SREBP2. Also mediates the first step in the proteolytic activation of the cyclic AMP-dependent transcription factor ATF-6 (ATF6 and ATF6B). Mediates the protein cleavage of GNPTAB into subunit alpha and beta, thereby participating in biogenesis of lysosomes. Cleaves the propeptide from FAM20C which is required for FAM20C secretion from the Golgi apparatus membrane and for enhancement of FAM20C kinase activity, promoting osteoblast differentiation and biomineralization. Involved in the regulation of M6P-dependent Golgi-to-lysosome trafficking of lysosomal enzymes. It is required for the activation of CREB3L2/BBF2H7, a transcriptional activator of MIA3/TANGO and other genes controlling mega vesicle formation. Therefore, it plays a key role in the regulation of mega vesicle-mediated collagen trafficking. In astrocytes and osteoblasts, upon DNA damage and ER stress, mediates the first step of the regulated intramembrane proteolytic activation of the transcription factor CREB3L1, leading to the inhibition of cell-cycle progression. In Cricetulus griseus (Chinese hamster), this protein is Membrane-bound transcription factor site-1 protease.